The chain runs to 201 residues: 3-isopropylmalate dehydratase small subunit (201 aa).

The protein belongs to the LeuD family. LeuD type 1 subfamily. In terms of assembly, heterodimer of LeuC and LeuD.

The catalysed reaction is (2R,3S)-3-isopropylmalate = (2S)-2-isopropylmalate. It functions in the pathway amino-acid biosynthesis; L-leucine biosynthesis; L-leucine from 3-methyl-2-oxobutanoate: step 2/4. Catalyzes the isomerization between 2-isopropylmalate and 3-isopropylmalate, via the formation of 2-isopropylmaleate. This Dinoroseobacter shibae (strain DSM 16493 / NCIMB 14021 / DFL 12) protein is 3-isopropylmalate dehydratase small subunit.